A 189-amino-acid polypeptide reads, in one-letter code: DFLFARTMIGVFKNIEYMCSRTSSKTWGKDAWKKIVVCVISDGRAKINPRTRAVLAGLGCYQDGIAKQQVNGKDVTAHIYEYTTQVGLELKGGQVSLKPRTGCPVQMIFCLKEKNQKKINSHRWFFQAFGRVLDPNICVLLDAGTRXGKDSIYHLWKXFDVDPMCGGACGEIKVMXSHGKKLLNPLVAG.

The protein belongs to the chitin synthase family. Class I subfamily.

The protein localises to the cell membrane. The enzyme catalyses [(1-&gt;4)-N-acetyl-beta-D-glucosaminyl](n) + UDP-N-acetyl-alpha-D-glucosamine = [(1-&gt;4)-N-acetyl-beta-D-glucosaminyl](n+1) + UDP + H(+). In terms of biological role, polymerizes chitin, a structural polymer of the cell wall and septum, by transferring the sugar moiety of UDP-GlcNAc to the non-reducing end of the growing chitin polymer. In Aspergillus niger, this protein is Chitin synthase 1 (chs1).